We begin with the raw amino-acid sequence, 273 residues long: Pyridoxal phosphate homeostasis protein (273 aa).

Phosphoserine is present on serine 6. Lysine 47 carries the post-translational modification N6-(pyridoxal phosphate)lysine. Tyrosine 69 bears the Phosphotyrosine mark. Lysine 125 is subject to N6-succinyllysine. Residues serine 226 and serine 244 each carry the phosphoserine modification. A compositionally biased stretch (basic and acidic residues) spans 251 to 260 (DYSKKTDKPA). The interval 251–273 (DYSKKTDKPAAELQAPEEVAQAH) is disordered.

The protein belongs to the pyridoxal phosphate-binding protein YggS/PROSC family.

Its function is as follows. Pyridoxal 5'-phosphate (PLP)-binding protein, which may be involved in intracellular homeostatic regulation of pyridoxal 5'-phosphate (PLP), the active form of vitamin B6. The polypeptide is Pyridoxal phosphate homeostasis protein (Bos taurus (Bovine)).